The chain runs to 471 residues: Ribosomal protein uS12 methylthiotransferase RimO (471 aa).

One can recognise an MTTase N-terminal domain in the interval 19 to 134 (PRVGFVSLGC…VMNAVHTHLP (116 aa)). [4Fe-4S] cluster is bound by residues Cys-28, Cys-64, Cys-93, Cys-169, Cys-173, and Cys-176. In terms of domain architecture, Radical SAM core spans 155-396 (LTPRHYAYLK…MAVAEEVSTA (242 aa)). Residues 399–471 (QKRVGQTMQV…QGHDLVGQPV (73 aa)) form the TRAM domain.

This sequence belongs to the methylthiotransferase family. RimO subfamily. The cofactor is [4Fe-4S] cluster.

It is found in the cytoplasm. It catalyses the reaction L-aspartate(89)-[ribosomal protein uS12]-hydrogen + (sulfur carrier)-SH + AH2 + 2 S-adenosyl-L-methionine = 3-methylsulfanyl-L-aspartate(89)-[ribosomal protein uS12]-hydrogen + (sulfur carrier)-H + 5'-deoxyadenosine + L-methionine + A + S-adenosyl-L-homocysteine + 2 H(+). Its function is as follows. Catalyzes the methylthiolation of an aspartic acid residue of ribosomal protein uS12. This is Ribosomal protein uS12 methylthiotransferase RimO from Delftia acidovorans (strain DSM 14801 / SPH-1).